Here is a 1138-residue protein sequence, read N- to C-terminus: Nuclear pore complex-interacting protein family member B4 (1138 aa).

Residues 63–87 form a helical membrane-spanning segment; sequence VIIAFPTSYKVVITLWIVYLWVSLL. Disordered regions lie at residues 241–263, 291–620, and 873–1138; these read NRMGHQPPPPTQQHSITDNSLSL, TPLP…NIKT, and ERLR…RRLS. Over residues 252–262 the composition is skewed to polar residues; that stretch reads QQHSITDNSLS. The span at 349–359 shows a compositional bias: pro residues; the sequence is PLPPSALPSAP. Composition is skewed to basic and acidic residues over residues 406-416, 448-458, 490-500, 532-542, 574-584, 908-918, 950-960, and 992-1002; these read DNIKTPAERLR.

It belongs to the NPIP family.

The protein resides in the membrane. The polypeptide is Nuclear pore complex-interacting protein family member B4 (NPIPB4) (Homo sapiens (Human)).